Here is a 232-residue protein sequence, read N- to C-terminus: Ubiquinone biosynthesis O-methyltransferase (232 aa).

Residues R36, G55, D76, and L120 each contribute to the S-adenosyl-L-methionine site.

The protein belongs to the methyltransferase superfamily. UbiG/COQ3 family.

It carries out the reaction a 3-demethylubiquinol + S-adenosyl-L-methionine = a ubiquinol + S-adenosyl-L-homocysteine + H(+). The catalysed reaction is a 3-(all-trans-polyprenyl)benzene-1,2-diol + S-adenosyl-L-methionine = a 2-methoxy-6-(all-trans-polyprenyl)phenol + S-adenosyl-L-homocysteine + H(+). It functions in the pathway cofactor biosynthesis; ubiquinone biosynthesis. Its function is as follows. O-methyltransferase that catalyzes the 2 O-methylation steps in the ubiquinone biosynthetic pathway. The sequence is that of Ubiquinone biosynthesis O-methyltransferase from Pseudomonas aeruginosa (strain UCBPP-PA14).